A 578-amino-acid chain; its full sequence is Probable actinorhodin transporter (578 aa).

The segment at 1–33 is disordered; that stretch reads MSSVEADEPDRATAPPSALLPEDGPGPDGTAAG. The next 12 membrane-spanning stretches (helical) occupy residues 78-98, 109-129, 135-155, 170-190, 202-222, 232-252, 259-279, 306-326, 341-361, 369-389, 444-464, and 546-566; these read VIQW…VVGG, MFVV…VAAG, AARF…LGLI, AFGP…GFLV, VFLI…LLLP, FDVV…FPLV, WPAW…GFVA, GLAV…LLAL, LTMT…GAVL, ALHG…LTIG, LGFT…LGSQ, and AMVR…ALAF.

The protein belongs to the major facilitator superfamily. EmrB family.

It localises to the cell membrane. Its function is as follows. Promotes the efflux of actinorhodin. The polypeptide is Probable actinorhodin transporter (actII-2) (Streptomyces coelicolor (strain ATCC BAA-471 / A3(2) / M145)).